Reading from the N-terminus, the 408-residue chain is Serine/threonine transporter SstT (408 aa).

The next 9 membrane-spanning stretches (helical) occupy residues Leu11 to Ala31, Phe43 to Leu63, Pro81 to Ser101, Ala141 to Leu161, Ile192 to Gly212, Leu216 to Val236, Met298 to Ile318, Val330 to Ile350, and Phe357 to Ile377.

The protein belongs to the dicarboxylate/amino acid:cation symporter (DAACS) (TC 2.A.23) family.

The protein resides in the cell inner membrane. The enzyme catalyses L-serine(in) + Na(+)(in) = L-serine(out) + Na(+)(out). The catalysed reaction is L-threonine(in) + Na(+)(in) = L-threonine(out) + Na(+)(out). Involved in the import of serine and threonine into the cell, with the concomitant import of sodium (symport system). This Shewanella sp. (strain W3-18-1) protein is Serine/threonine transporter SstT.